A 395-amino-acid polypeptide reads, in one-letter code: Prostaglandin D2 receptor 2 (395 aa).

Residues 1-33 (MSANATLKPLCPILEQMSRLQSHSNTSIRYIDH) lie on the Extracellular side of the membrane. 2 N-linked (GlcNAc...) asparagine glycosylation sites follow: Asn4 and Asn25. A helical transmembrane segment spans residues 34–56 (AAVLLHGLASLLGLVENGVILFV). Residues 57–67 (VGCRMRQTVVT) are Cytoplasmic-facing. The helical transmembrane segment at 68–89 (TWVLHLALSDLLASASLPFFTY) threads the bilayer. The Extracellular segment spans residues 90-106 (FLAVGHSWELGTTFCKL). A disulfide bridge links Cys104 with Cys182. Residues 107-127 (HSSIFFLNMFASGFLLSAISL) form a helical membrane-spanning segment. Residues 128–146 (DRCLQVVRPVWAQNHRTVA) lie on the Cytoplasmic side of the membrane. A helical membrane pass occupies residues 147–168 (AAHKVCLVLWALAVLNTVPYFV). At 169-210 (FRDTISRLDGRIMCYYNVLLLNPGPDRDATCNSRQVALAVSK) the chain is on the extracellular side. Residues 211–231 (FLLAFLVPLAIIASSHAAVSL) traverse the membrane as a helical segment. Topologically, residues 232–247 (RLQHRGRRRPGRFVRL) are cytoplasmic. Residues 248–269 (VAAVVAAFALCWGPYHVFSLLE) form a helical membrane-spanning segment. Over 270-288 (ARAHANPGLRPLVWRGLPF) the chain is Extracellular. The chain crosses the membrane as a helical span at residues 289 to 308 (VTSLAFFNSVANPVLYVLTC). Residues 309 to 395 (PDMLRKLRRS…LNRALSSTSS (87 aa)) are Cytoplasmic-facing. The Involved in the recycling of CRTH2 motif lies at 330 to 333 (DSEL). Ser331 and Ser345 each carry phosphoserine. A disordered region spans residues 333–363 (LGGAGSSRRRRTSSTARSASPLALCSRPEEP).

The protein belongs to the G-protein coupled receptor 1 family. In terms of processing, phosphorylated. Widespread expression. High expression in stomach, small intestine, heart and thymus. Intermediate expression in colon, spinal cord and peripheral blood and low expression in brain, skeletal muscle and spleen. Expressed also on Th2- and Tc2- type cells, eosinophils and basophils.

Its subcellular location is the cell membrane. Functionally, receptor for prostaglandin D2 (PGD2). Coupled to the G(i)-protein. Receptor activation may result in pertussis toxin-sensitive decreases in cAMP levels and Ca(2+) mobilization. PI3K signaling is also implicated in mediating PTGDR2 effects. PGD2 induced receptor internalization. CRTH2 internalization can be regulated by diverse kinases such as, PKC, PKA, GRK2, GPRK5/GRK5 and GRK6. Receptor activation is responsible, at least in part, in immune regulation and allergic/inflammation responses. This chain is Prostaglandin D2 receptor 2 (PTGDR2), found in Homo sapiens (Human).